The primary structure comprises 207 residues: MALHTVLIMLSLLPMLEAQNPEHANITIGEPITNETLGWLSDKWFFMGAAFRKLEYRQAIQMMQTEFFYLTTNLINDTIELRESQTIGDQCVYNSTHLGFQRENGTFSKYEGGVETFAHLIVLRKHGAFMLAFDLNDEKKRGLSLYAKRPDMTLELREVFQKAVKHVGMDESEIIFVDWKKDKCGQQEKKQLELGKETKKDPEEGQA.

The signal sequence occupies residues 1 to 18 (MALHTVLIMLSLLPMLEA). Residues Asn25, Asn34, Asn76, Asn94, and Asn104 are each glycosylated (N-linked (GlcNAc...) asparagine). Cys91 and Cys184 are joined by a disulfide.

This sequence belongs to the calycin superfamily. Lipocalin family. As to expression, expressed by the liver and secreted in plasma.

The protein resides in the secreted. Functionally, functions as a transport protein in the blood stream. Binds various ligands in the interior of its beta-barrel domain. Appears to function in modulating the activity of the immune system during the acute-phase reaction. This is Alpha-1-acid glycoprotein 8 (Orm8) from Mus caroli (Ryukyu mouse).